Consider the following 48-residue polypeptide: MSLQNYHGMMNLKIVHIKDMLYHLRISAMTLAIKKRMKFRLNRAAWKM.

The chain is Putative protein P' from Bos taurus (Bovine).